A 409-amino-acid chain; its full sequence is FAD-dependent monooxygenase phnB (409 aa).

FAD contacts are provided by Glu-35, Ala-50, Arg-110, and Asp-311.

Belongs to the paxM FAD-dependent monooxygenase family. FAD is required as a cofactor.

The catalysed reaction is 3,6,7,9-tetrahydroxy-3-methyl-2,3-dihydro-1H-naphtho[2,1-b]pyran-1-one + NADPH + O2 + H(+) = 2,3,4,7,9-pentahydroxy-6-methyl-1H-phenalen-1-one + NADP(+) + 2 H2O. It functions in the pathway secondary metabolite biosynthesis. Its function is as follows. FAD-dependent monooxygenase; part of the gene cluster that mediates the biosynthesis of phenalenones such as herqueinone, compounds that have been reported to treat tumors, bacterial infections and/or mycoses, and rheumatic diseases. The non-reducing polyketide synthase phnA synthesizes the heptaketide backbone and cyclizes it into the angular, hemiketal-containing naphtho-gamma-pyrone prephenalenone. The product template (PT) domain of phnA catalyzes only the C4-C9 aldol condensation, which is unprecedented among known PT domains. The transformation of prephenalenone to phenalenones requires an FAD-dependent monooxygenase phnB, which catalyzes the C2 aromatic hydroxylation of prephenalenone and ring opening of the gamma-pyrone ring simultaneously. Subsequent intramolecular deprotonation of C3 phenolic oxygen accelerates phenalenone ring closure to yield the tricyclic phenalenone core with a C2 hydroxylation. The prenyltransferase phnF further catalyzes reverse C-prenylation of phenalenone by direct electrophilic substitution at C6, or possibly via first a forward O-prenylation of a neighboring phenol in phenalenone, followed by a Claisen rearrangement. The hydroalkoxylation enzyme phnH catalyzes the 5-exo-trig cyclization via acid catalysis after the spontaneous deprotonation of 7-OH, which leads to the formation of the dihydrobenzofuran atrovenetin. Atrovenetin is further converted to deoxyherqueinone by the O-methyltransferase phnC which can methylate C2-OH to stabilize the northern portion of the phenalenone core. Finally, the oxidoreductase phnG converts deoxyherqueinone to herqueinone via C6 hydroxylation. The protein is FAD-dependent monooxygenase phnB of Penicillium herquei.